The primary structure comprises 331 residues: Ketol-acid reductoisomerase (NADP(+)) (331 aa).

Residues 1–181 (MKVYYEKDAN…GGSRSGVIET (181 aa)) form the KARI N-terminal Rossmann domain. NADP(+) is bound by residues 24–27 (YGSQ), Arg-47, and 82–85 (DQVQ). The active site involves His-107. Gly-133 lines the NADP(+) pocket. The 146-residue stretch at 182 to 327 (TFREETETDL…GELRGMMPWL (146 aa)) folds into the KARI C-terminal knotted domain. Mg(2+) is bound by residues Asp-190, Glu-194, Glu-226, and Glu-230. Residue Ser-251 coordinates substrate.

This sequence belongs to the ketol-acid reductoisomerase family. The cofactor is Mg(2+).

The catalysed reaction is (2R)-2,3-dihydroxy-3-methylbutanoate + NADP(+) = (2S)-2-acetolactate + NADPH + H(+). It catalyses the reaction (2R,3R)-2,3-dihydroxy-3-methylpentanoate + NADP(+) = (S)-2-ethyl-2-hydroxy-3-oxobutanoate + NADPH + H(+). It participates in amino-acid biosynthesis; L-isoleucine biosynthesis; L-isoleucine from 2-oxobutanoate: step 2/4. The protein operates within amino-acid biosynthesis; L-valine biosynthesis; L-valine from pyruvate: step 2/4. Functionally, involved in the biosynthesis of branched-chain amino acids (BCAA). Catalyzes an alkyl-migration followed by a ketol-acid reduction of (S)-2-acetolactate (S2AL) to yield (R)-2,3-dihydroxy-isovalerate. In the isomerase reaction, S2AL is rearranged via a Mg-dependent methyl migration to produce 3-hydroxy-3-methyl-2-ketobutyrate (HMKB). In the reductase reaction, this 2-ketoacid undergoes a metal-dependent reduction by NADPH to yield (R)-2,3-dihydroxy-isovalerate. The chain is Ketol-acid reductoisomerase (NADP(+)) from Nitratidesulfovibrio vulgaris (strain ATCC 29579 / DSM 644 / CCUG 34227 / NCIMB 8303 / VKM B-1760 / Hildenborough) (Desulfovibrio vulgaris).